We begin with the raw amino-acid sequence, 210 residues long: Primase-associated factor LEF-2 (210 aa).

This sequence belongs to the baculoviridae LEF-2 family. As to quaternary structure, interacts with the DNA primase.

The protein localises to the virion. It localises to the host nucleus. The protein resides in the host cytoplasm. In terms of biological role, plays an essential role in viral DNA replication. Does not seem to participate in the initiation step but is rather important for the amplification of DNA. Also required for expression from the vp39 and polh promoters. In Autographa californica nuclear polyhedrosis virus (AcMNPV), this protein is Primase-associated factor LEF-2 (LEF-2).